The chain runs to 60 residues: Putative mercuric resistance protein (60 aa).

This is Putative mercuric resistance protein from Shigella flexneri.